Consider the following 372-residue polypeptide: Rab9 effector protein with kelch motifs (372 aa).

5 Kelch repeats span residues 49–95 (KVFI…FIPS), 100–146 (RIWV…TSSA), 151–200 (QLYV…VMVA), 204–250 (KLFI…SAVA), and 254–303 (HVYI…IIPW). A Phosphoserine modification is found at serine 133. The segment at 314–340 (SNSLTLNHEAEKEDSADKVMSHSGDSH) is disordered. Residues 321–340 (HEAEKEDSADKVMSHSGDSH) are compositionally biased toward basic and acidic residues.

As to quaternary structure, interacts with PIKFYVE; the interaction recruits RABEPK to the endosomal membrane. Interacts with RAB9 in its GTP-bound conformation. Post-translationally, phosphorylated on Ser residues by PIKFYVE.

The protein localises to the cytoplasm. The protein resides in the endosome membrane. Rab9 effector required for endosome to trans-Golgi network (TGN) transport. The sequence is that of Rab9 effector protein with kelch motifs from Homo sapiens (Human).